The primary structure comprises 127 residues: uncharacterized protein (127 aa).

This is an uncharacterized protein from Rickettsia conorii (strain ATCC VR-613 / Malish 7).